Reading from the N-terminus, the 598-residue chain is Elongation factor 4 (598 aa).

Positions 2 to 183 constitute a tr-type G domain; the sequence is KHIRNFCIIA…AIIEKIPHPK (182 aa). GTP-binding positions include 14–19 and 130–133; these read DHGKST and NKVD.

Belongs to the TRAFAC class translation factor GTPase superfamily. Classic translation factor GTPase family. LepA subfamily.

It is found in the cell inner membrane. It carries out the reaction GTP + H2O = GDP + phosphate + H(+). In terms of biological role, required for accurate and efficient protein synthesis under certain stress conditions. May act as a fidelity factor of the translation reaction, by catalyzing a one-codon backward translocation of tRNAs on improperly translocated ribosomes. Back-translocation proceeds from a post-translocation (POST) complex to a pre-translocation (PRE) complex, thus giving elongation factor G a second chance to translocate the tRNAs correctly. Binds to ribosomes in a GTP-dependent manner. The sequence is that of Elongation factor 4 from Flavobacterium psychrophilum (strain ATCC 49511 / DSM 21280 / CIP 103535 / JIP02/86).